The chain runs to 733 residues: Polyribonucleotide nucleotidyltransferase (733 aa).

The tract at residues 404–424 is disordered; the sequence is NYNMPPYSTGETGRVGSPKRR. Mg(2+) contacts are provided by Asp-516 and Asp-522. In terms of domain architecture, KH spans 582–641; that stretch reads PRIITVHIPVDKIGEVIGPKGKMINQIQDDTGANISIEDDGTIFIGADNGDSAESARSMI. Residues 653–725 enclose the S1 motif domain; it reads GERYLGTVVK…DRGKLSLVLA (73 aa).

This sequence belongs to the polyribonucleotide nucleotidyltransferase family. The cofactor is Mg(2+).

The protein resides in the cytoplasm. It catalyses the reaction RNA(n+1) + phosphate = RNA(n) + a ribonucleoside 5'-diphosphate. Its function is as follows. Involved in mRNA degradation. Catalyzes the phosphorolysis of single-stranded polyribonucleotides processively in the 3'- to 5'-direction. In Cutibacterium acnes (strain DSM 16379 / KPA171202) (Propionibacterium acnes), this protein is Polyribonucleotide nucleotidyltransferase.